Reading from the N-terminus, the 831-residue chain is Glucan 1,3-beta-glucosidase D (831 aa).

The span at 1–21 shows a compositional bias: basic and acidic residues; the sequence is MPSQSRSRDRYGRDSDRDRSR. Disordered stretches follow at residues 1–246 and 261–288; these read MPSQ…RGQS and APDMEVRLRGGGRGPPRERRWEKDSDGS. Over 1–300 the chain is Cytoplasmic; sequence MPSQSRSRDR…LTPFWKRKKW (300 aa). Over residues 32 to 41 the composition is skewed to acidic residues; it reads EDDDDDDDFD. 3 stretches are compositionally biased toward basic and acidic residues: residues 42-70, 78-94, and 151-177; these read DNPRDRRYRRDGYRRAPVDSRAYDSHDDY, EPRRYRSDTERRRERAR, and DAARRLRRRERERERERRAETSKHKST. The span at 178–195 shows a compositional bias: low complexity; sequence DSSNSSAGLLNANALAKL. Basic and acidic residues-rich tracts occupy residues 197 to 216 and 275 to 286; these read AQHEELDRQEQRRAEKEAKA and PPRERRWEKDSD. Residues 301 to 321 form a helical; Signal-anchor for type II membrane protein membrane-spanning segment; it reads WWIGAIVLVIVVIIIVVAVVV. Residues 322 to 831 lie on the Extracellular side of the membrane; it reads SNNKKSDSDS…PSFGNLPEYY (510 aa). The interval 325–360 is disordered; it reads KKSDSDSDSDSNSGSSDSWGGDKSSLNGLDHDSIPK. Low complexity predominate over residues 334 to 350; the sequence is DSNSGSSDSWGGDKSSL. 3 N-linked (GlcNAc...) asparagine glycosylation sites follow: N379, N396, and N547. E598 functions as the Proton donor in the catalytic mechanism. Residues N611, N637, N670, and N690 are each glycosylated (N-linked (GlcNAc...) asparagine). E703 (nucleophile) is an active-site residue.

Belongs to the glycosyl hydrolase 5 (cellulase A) family.

The protein resides in the cell membrane. The catalysed reaction is Successive hydrolysis of beta-D-glucose units from the non-reducing ends of (1-&gt;3)-beta-D-glucans, releasing alpha-glucose.. Its function is as follows. Glucosidase involved in the degradation of cellulosic biomass. Active on lichenan. In Emericella nidulans (strain FGSC A4 / ATCC 38163 / CBS 112.46 / NRRL 194 / M139) (Aspergillus nidulans), this protein is Glucan 1,3-beta-glucosidase D (exgD).